The following is a 329-amino-acid chain: MNKITLPIGMHDKLFKRARVTYEIERDISDFLMAQGFNRIDTPTLEHFEVFSDHVEPHHYHLFDKKGELLVLRPDVTSQIGRVIASTRVHTPTKFSYSGKVFHYQEELRGLANELSQAGIEIIGYPAREAVLEAIKTAKQSLDLAQVKSYQFEFSHAAILQTILESLVLDSQEEAQLLDYIRKKNRTGIFEFTQSRPSEFDDFLQELPYLFGPSQQVLARAREIVDNERILTALDDVEQVLRSLSDLLDQTTMDLGQVATMPYYTGLTFKVFGDRVPDAFLSGGRYDQLFKRFGATELTAIGWSLDIDSVYQAIHDDLPDEGGKEGDGR.

It belongs to the class-II aminoacyl-tRNA synthetase family. HisZ subfamily. As to quaternary structure, heteromultimer composed of HisG and HisZ subunits.

Its subcellular location is the cytoplasm. It functions in the pathway amino-acid biosynthesis; L-histidine biosynthesis; L-histidine from 5-phospho-alpha-D-ribose 1-diphosphate: step 1/9. Functionally, required for the first step of histidine biosynthesis. May allow the feedback regulation of ATP phosphoribosyltransferase activity by histidine. This is ATP phosphoribosyltransferase regulatory subunit from Streptococcus gordonii (strain Challis / ATCC 35105 / BCRC 15272 / CH1 / DL1 / V288).